An 871-amino-acid chain; its full sequence is MGIVDEFQALKAETDADLLAMQVGDFYEFFAADARTVASVLDLQVSEKSNHGSSYPMAGVPVDDLTPYLAALVERGYRVAVAEQSETDAGDIEREIERVVTPGTLLASTDADPRYLAAVVREAGGDWGLAFVDVTTGQFRVTRGADRADAVTELYRFAPAEVLPGPALRGDDDFLGVLRERTDATLTLHDAGAFDAGRATHRVREQFGDGVIESLGVAADGPVVRAAGAAVGYIAAADEGVLASVSRIQPFGGGDHVELDATTQRNLELTETMTGGSDGSLLATIDHTASAAGGRRLAAWVTRPTRDRAELDRRQAAVGALADAALARDALGDVLGEIYDLERLASRAASGRADATDLLRVRDTLAALPDVADALTTTPELAESPARDVLARVDRAAAADVRAELADALADDPPKTLSEGGLLQAGYDEALDELLAAHDEHRAWLDGLADREKDRLGITHLQVDRNKTDGYYIQVGNSETDAVPDGEDGAYRRIKQLKNATRYTMAELDSHEREVLRIEAERAELERELFAALRERVGERAAVLQDVGRALAEVDALVSLAEHAAANQWVRPELVAGDGLDIDAGRHPVVEQTTSFVPNDARFDASRRFQVVTGPNMSGKSTYMRQVAVIVLLAQVGSFVPADAARIGLVDGIYTRVGALDELAGGRSTFMVEMEELSRILHAATSDSLVVLDEVGRGTATYDGISIAWAATEYLHNEVRATTLFATHYHELTALADHLDAVVNVHVAAEERDGAVTFLRTVRDGATDRSYGVHVAALAGVPEPVVDRARGVLDRLREENAVEAKGSAGESVQAVFDVDSGGFVDDAGDDGEADDPEAAAVLDELRTVELAETSPVELLGTVQAWQDRLED.

614–621 (GPNMSGKS) serves as a coordination point for ATP.

This sequence belongs to the DNA mismatch repair MutS family.

Its function is as follows. This protein is involved in the repair of mismatches in DNA. It is possible that it carries out the mismatch recognition step. This protein has a weak ATPase activity. In Halobacterium salinarum (strain ATCC 29341 / DSM 671 / R1), this protein is DNA mismatch repair protein MutS 1.